The chain runs to 716 residues: Epidermal growth factor receptor kinase substrate 8-like protein 2 (716 aa).

Disordered stretches follow at residues 1–25 (MSQS…DGVA) and 182–243 (PQTL…SQEE). Residues 46–202 (MHETSQYHVQ…RQRQSILPPP (157 aa)) form the PID domain. Over residues 199–208 (LPPPQGPAPI) the composition is skewed to pro residues. Residues 234 to 243 (GFRRRESQEE) are compositionally biased toward basic and acidic residues. Phosphoserine is present on S240. Position 304 is a phosphothreonine (T304). The tract at residues 449–488 (VSPVSRQSIRNSQKHSPTSEPTPPGDALPPVSSPHTHRGY) is disordered. The residue at position 450 (S450) is a Phosphoserine. Over residues 452–467 (VSRQSIRNSQKHSPTS) the composition is skewed to polar residues. T470 bears the Phosphothreonine mark. An SH3 domain is found at 493 to 552 (AMAKYVKILYDFTARNANELSVLKDEVLEVLEDGRQWWKLRSRSGQAGYVPCNILGEARP). S571 is subject to Phosphoserine.

It belongs to the EPS8 family. As to quaternary structure, interacts with ABI1. Part of a complex that contains SOS1, ABI1 and EPS8L2. Associates with F-actin.

It localises to the cytoplasm. Its subcellular location is the cell projection. The protein localises to the stereocilium. Functionally, stimulates guanine exchange activity of SOS1. May play a role in membrane ruffling and remodeling of the actin cytoskeleton. In the cochlea, is required for stereocilia maintenance in adult hair cells. The chain is Epidermal growth factor receptor kinase substrate 8-like protein 2 (EPS8L2) from Pongo abelii (Sumatran orangutan).